Reading from the N-terminus, the 477-residue chain is Aspartyl/glutamyl-tRNA(Asn/Gln) amidotransferase subunit B (477 aa).

This sequence belongs to the GatB/GatE family. GatB subfamily. As to quaternary structure, heterotrimer of A, B and C subunits.

It catalyses the reaction L-glutamyl-tRNA(Gln) + L-glutamine + ATP + H2O = L-glutaminyl-tRNA(Gln) + L-glutamate + ADP + phosphate + H(+). The enzyme catalyses L-aspartyl-tRNA(Asn) + L-glutamine + ATP + H2O = L-asparaginyl-tRNA(Asn) + L-glutamate + ADP + phosphate + 2 H(+). In terms of biological role, allows the formation of correctly charged Asn-tRNA(Asn) or Gln-tRNA(Gln) through the transamidation of misacylated Asp-tRNA(Asn) or Glu-tRNA(Gln) in organisms which lack either or both of asparaginyl-tRNA or glutaminyl-tRNA synthetases. The reaction takes place in the presence of glutamine and ATP through an activated phospho-Asp-tRNA(Asn) or phospho-Glu-tRNA(Gln). This is Aspartyl/glutamyl-tRNA(Asn/Gln) amidotransferase subunit B from Legionella pneumophila (strain Paris).